The sequence spans 1187 residues: uncharacterized protein (1187 aa).

Disordered regions lie at residues 302–405, 419–451, 511–551, 1095–1134, and 1148–1187; these read QKSQ…KPVG, QAFS…RASK, KAPG…LRLE, KSQR…KLPD, and PHLP…PASL. A compositionally biased stretch (low complexity) spans 321-333; sequence LPLSGPAGAPPLG. Residues 352–361 show a composition bias toward basic residues; that stretch reads SRRKARHKAS. Low complexity-rich tracts occupy residues 422–435 and 517–534; these read SPLL…SPAA and GTTL…GEPP. The segment covering 1096–1107 has biased composition (polar residues); sequence SQRTPQGEQSRN. The segment covering 1160–1174 has biased composition (low complexity); sequence TGGSFSSEGTGSQTS.

This is an uncharacterized protein from Mus musculus (Mouse).